The primary structure comprises 207 residues: Partner of Y14 and mago (207 aa).

Disordered regions lie at residues 1–28 (MSTYLQSSEGKFIPATKRPDGTWRKARR) and 52–133 (QRQA…NSIS). A coiled-coil region spans residues 64–91 (LLAAESKKEREKQERTRAKKQEKESGRQ). Positions 68 to 90 (ESKKEREKQERTRAKKQEKESGR) are enriched in basic and acidic residues. Over residues 123–133 (PSGSRDINSIS) the composition is skewed to polar residues. Positions 152-184 (AKQLKKLRKKIREIEQIESRIQAGEQKKLDKDQ) form a coiled coil.

This sequence belongs to the pym family. In terms of assembly, interacts (via N-terminus) with mago and tsu/RBM8A; the interaction is direct. In terms of tissue distribution, expression detected in the ovary. In the oocyte expressed in the germarium, nurse cell and follicle cell.

The protein resides in the cytoplasm. The protein localises to the nucleus. Functionally, regulator of the exon junction complex (EJC), a multiprotein complex that associates immediately upstream of the exon-exon junction on mRNAs and serves as a positional landmark for the intron exon structure of genes and directs post-transcriptional processes in the cytoplasm such as mRNA export, nonsense-mediated mRNA decay (NMD) or translation. Acts as an EJC disassembly factor by disrupting mature EJC from spliced mRNAs. Required for normal localization of osk mRNA to the posterior pole of the developing oocyte. Does not interact with the small ribosomal unit or components of the translation initiation complex. May not function in cap-dependent translation regulation. The sequence is that of Partner of Y14 and mago from Drosophila melanogaster (Fruit fly).